The sequence spans 366 residues: Carboxy-cis,cis-muconate cyclase (366 aa).

Active-site residues include His149, Arg197, Glu213, and Arg275.

Belongs to the cycloisomerase 2 family. As to quaternary structure, homotetramer.

The catalysed reaction is 3-carboxy-2,5-dihydro-5-oxofuran-2-acetate = 3-carboxy-cis,cis-muconate. It functions in the pathway aromatic compound metabolism; beta-ketoadipate pathway; 3-carboxy-cis,cis-muconate from 3-carboxy-2,5-dihydro-5-oxofuran-2-acetate: step 1/1. Catalyzes a syn cycloisomerization. Also possesses mle activity. This chain is Carboxy-cis,cis-muconate cyclase, found in Neurospora crassa (strain ATCC 24698 / 74-OR23-1A / CBS 708.71 / DSM 1257 / FGSC 987).